Here is a 243-residue protein sequence, read N- to C-terminus: UPF0758 protein MAE_44350 (243 aa).

The MPN domain occupies 113 to 235; sequence VIDSPDTAAA…FQSLRQITDL (123 aa). Residues His184, His186, and Asp197 each contribute to the Zn(2+) site. Residues 184–197 carry the JAMM motif motif; sequence HNHPTGSLVPSQDD.

It belongs to the UPF0758 family.

The polypeptide is UPF0758 protein MAE_44350 (Microcystis aeruginosa (strain NIES-843 / IAM M-2473)).